A 435-amino-acid polypeptide reads, in one-letter code: 3-phosphoshikimate 1-carboxyvinyltransferase (435 aa).

3-phosphoshikimate is bound by residues Lys-22, Ser-23, and Arg-27. Lys-22 is a phosphoenolpyruvate binding site. Phosphoenolpyruvate-binding residues include Gly-94 and Arg-122. 3-phosphoshikimate is bound by residues Ser-166, Gln-168, Asp-314, and Lys-341. Gln-168 is a binding site for phosphoenolpyruvate. The active-site Proton acceptor is the Asp-314. Residues Arg-345 and Arg-388 each coordinate phosphoenolpyruvate.

Belongs to the EPSP synthase family. Monomer.

It localises to the cytoplasm. The enzyme catalyses 3-phosphoshikimate + phosphoenolpyruvate = 5-O-(1-carboxyvinyl)-3-phosphoshikimate + phosphate. It participates in metabolic intermediate biosynthesis; chorismate biosynthesis; chorismate from D-erythrose 4-phosphate and phosphoenolpyruvate: step 6/7. In terms of biological role, catalyzes the transfer of the enolpyruvyl moiety of phosphoenolpyruvate (PEP) to the 5-hydroxyl of shikimate-3-phosphate (S3P) to produce enolpyruvyl shikimate-3-phosphate and inorganic phosphate. In Vesicomyosocius okutanii subsp. Calyptogena okutanii (strain HA), this protein is 3-phosphoshikimate 1-carboxyvinyltransferase.